We begin with the raw amino-acid sequence, 270 residues long: uncharacterized protein (270 aa).

This is an uncharacterized protein from Methanocaldococcus jannaschii (strain ATCC 43067 / DSM 2661 / JAL-1 / JCM 10045 / NBRC 100440) (Methanococcus jannaschii).